Here is a 149-residue protein sequence, read N- to C-terminus: Protein cornichon homolog 2 (149 aa).

The next 3 helical transmembrane spans lie at 3-23, 59-79, and 117-137; these read IELI…GLTA, ALCA…MAPV, and YFSL…TLFI.

It belongs to the cornichon family.

It localises to the endoplasmic reticulum membrane. Its subcellular location is the golgi apparatus membrane. Acts as a cargo receptor necessary for the transportation of secretory proteins from the endoplasmic reticulum (ER) in COPII-coated vesicles targeted to the Golgi apparatus. This chain is Protein cornichon homolog 2, found in Oryza sativa subsp. japonica (Rice).